Consider the following 456-residue polypeptide: Methylenetetrahydrofolate--tRNA-(uracil-5-)-methyltransferase TrmFO (456 aa).

Glycine 11–glycine 16 serves as a coordination point for FAD.

This sequence belongs to the MnmG family. TrmFO subfamily. It depends on FAD as a cofactor.

Its subcellular location is the cytoplasm. The catalysed reaction is uridine(54) in tRNA + (6R)-5,10-methylene-5,6,7,8-tetrahydrofolate + NADH + H(+) = 5-methyluridine(54) in tRNA + (6S)-5,6,7,8-tetrahydrofolate + NAD(+). The enzyme catalyses uridine(54) in tRNA + (6R)-5,10-methylene-5,6,7,8-tetrahydrofolate + NADPH + H(+) = 5-methyluridine(54) in tRNA + (6S)-5,6,7,8-tetrahydrofolate + NADP(+). Catalyzes the folate-dependent formation of 5-methyl-uridine at position 54 (M-5-U54) in all tRNAs. The polypeptide is Methylenetetrahydrofolate--tRNA-(uracil-5-)-methyltransferase TrmFO (Synechococcus sp. (strain CC9605)).